The following is a 378-amino-acid chain: Actin-related protein 2/3 complex subunit 1B (378 aa).

WD repeat units follow at residues 8-47, 53-92, 97-138, 143-182, 203-242, 257-295, and 331-375; these read RFAE…HWER, KHDQ…WVPT, RLNR…WVSK, RHES…VDTK, LSYS…PLAQ, ISEK…KAAS, and VHDN…QELG. The disordered stretch occupies residues 319–340; sequence TTANDASDSRGGVHDNSITSIV.

The protein belongs to the WD repeat ARPC1 family. Component of the Arp2/3 complex composed of ARP2, ARP3, ARPC1/p41-ARC, ARPC2/p34-ARC, ARPC3/p21-ARC, ARPC4/p20-ARC and ARPC5/p16-ARC. In terms of tissue distribution, expressed at low levels in all tissues with a relatively highest expression in inflorescences.

It localises to the cytoplasm. The protein localises to the cytoskeleton. In terms of biological role, functions as a component of the Arp2/3 complex which is involved in regulation of actin polymerization and together with an activating nucleation-promoting factor (NPF) mediates the formation of branched actin networks. Arp2/3 complex plays a critical role in the control of cell morphogenesis via the modulation of cell polarity development. This is Actin-related protein 2/3 complex subunit 1B (ARPC1B) from Arabidopsis thaliana (Mouse-ear cress).